A 258-amino-acid polypeptide reads, in one-letter code: Undecaprenyl-diphosphatase (258 aa).

8 helical membrane-spanning segments follow: residues 1–21, 42–62, 71–91, 96–116, 134–154, 173–193, 211–231, and 237–257; these read MSIIDAVILGIVEGLTEFLPV, LKCFEVVIQLGSILAVVFTFF, LWIKLIIGFLPTAAIGYLLYS, LFSQNVVVYMLIIWGVIFIVV, GISYKQAFFIGLSQCFAMVPG, QTAAAFSFLLAVPTMFAATFY, LFLLGGFVAFLVALFAIKMFL, and FDYIPFGIYRILIAFAFMFFV.

This sequence belongs to the UppP family.

The protein resides in the cell inner membrane. It carries out the reaction di-trans,octa-cis-undecaprenyl diphosphate + H2O = di-trans,octa-cis-undecaprenyl phosphate + phosphate + H(+). Catalyzes the dephosphorylation of undecaprenyl diphosphate (UPP). Confers resistance to bacitracin. The chain is Undecaprenyl-diphosphatase from Campylobacter hominis (strain ATCC BAA-381 / DSM 21671 / CCUG 45161 / LMG 19568 / NCTC 13146 / CH001A).